Reading from the N-terminus, the 285-residue chain is ATP synthase subunit a (285 aa).

Transmembrane regions (helical) follow at residues 41 to 61 (TWHVDTLAWSIGLGLIFLWIF), 102 to 122 (IAPLALTIFVWVFLMNLMDLI), 164 to 184 (LGVFILMVGFAIKIKGIGGFI), 197 to 217 (VFVQILLIPFNLLLELIALVS), 226 to 246 (LFGNLYAGELIFILIGAIGFM), and 252 to 272 (FVWAVFHILVITLQAFLFMML).

The protein belongs to the ATPase A chain family. As to quaternary structure, F-type ATPases have 2 components, CF(1) - the catalytic core - and CF(0) - the membrane proton channel. CF(1) has five subunits: alpha(3), beta(3), gamma(1), delta(1), epsilon(1). CF(0) has three main subunits: a(1), b(2) and c(9-12). The alpha and beta chains form an alternating ring which encloses part of the gamma chain. CF(1) is attached to CF(0) by a central stalk formed by the gamma and epsilon chains, while a peripheral stalk is formed by the delta and b chains.

The protein resides in the cell inner membrane. Key component of the proton channel; it plays a direct role in the translocation of protons across the membrane. This chain is ATP synthase subunit a, found in Pseudoalteromonas translucida (strain TAC 125).